A 190-amino-acid polypeptide reads, in one-letter code: Protein GrpE (190 aa).

Basic and acidic residues predominate over residues 1–26 (MADKEKDAVIVDETEHVDVDSKESKK). Residues 1–31 (MADKEKDAVIVDETEHVDVDSKESKKEKKTK) form a disordered region.

Belongs to the GrpE family. As to quaternary structure, homodimer.

The protein resides in the cytoplasm. In terms of biological role, participates actively in the response to hyperosmotic and heat shock by preventing the aggregation of stress-denatured proteins, in association with DnaK and GrpE. It is the nucleotide exchange factor for DnaK and may function as a thermosensor. Unfolded proteins bind initially to DnaJ; upon interaction with the DnaJ-bound protein, DnaK hydrolyzes its bound ATP, resulting in the formation of a stable complex. GrpE releases ADP from DnaK; ATP binding to DnaK triggers the release of the substrate protein, thus completing the reaction cycle. Several rounds of ATP-dependent interactions between DnaJ, DnaK and GrpE are required for fully efficient folding. The protein is Protein GrpE of Acholeplasma laidlawii (strain PG-8A).